The following is a 474-amino-acid chain: Transcription termination factor Rho (474 aa).

The interval methionine 1 to isoleucine 60 is disordered. The region spanning glutamate 107 to proline 182 is the Rho RNA-BD domain. ATP contacts are provided by residues glycine 226 to glycine 231, arginine 238 to valine 243, and arginine 269.

Belongs to the Rho family. Homohexamer. The homohexamer assembles into an open ring structure.

Facilitates transcription termination by a mechanism that involves Rho binding to the nascent RNA, activation of Rho's RNA-dependent ATPase activity, and release of the mRNA from the DNA template. The polypeptide is Transcription termination factor Rho (Akkermansia muciniphila (strain ATCC BAA-835 / DSM 22959 / JCM 33894 / BCRC 81048 / CCUG 64013 / CIP 107961 / Muc)).